The primary structure comprises 347 residues: GMP reductase (347 aa).

NADP(+) is bound at residue 108 to 131; that stretch reads ADFEKTKQILDLNPALNFVCIDVA. K(+)-binding residues include G181 and G183. C186 functions as the Thioimidate intermediate in the catalytic mechanism. 216-239 contacts NADP(+); the sequence is IVSDGGCTTPGDVAKAFGGGADFV.

The protein belongs to the IMPDH/GMPR family. GuaC type 1 subfamily. As to quaternary structure, homotetramer.

The catalysed reaction is IMP + NH4(+) + NADP(+) = GMP + NADPH + 2 H(+). Catalyzes the irreversible NADPH-dependent deamination of GMP to IMP. It functions in the conversion of nucleobase, nucleoside and nucleotide derivatives of G to A nucleotides, and in maintaining the intracellular balance of A and G nucleotides. This Shigella boydii serotype 4 (strain Sb227) protein is GMP reductase.